The primary structure comprises 398 residues: Acetate kinase (398 aa).

N8 contributes to the Mg(2+) binding site. An ATP-binding site is contributed by K15. R89 contributes to the substrate binding site. The active-site Proton donor/acceptor is the D146. ATP contacts are provided by residues 206-210 (HIGNG), 283-285 (DMR), and 331-335 (GMGEN). E383 provides a ligand contact to Mg(2+).

Belongs to the acetokinase family. As to quaternary structure, homodimer. Mg(2+) is required as a cofactor. The cofactor is Mn(2+).

The protein localises to the cytoplasm. It carries out the reaction acetate + ATP = acetyl phosphate + ADP. It participates in metabolic intermediate biosynthesis; acetyl-CoA biosynthesis; acetyl-CoA from acetate: step 1/2. Functionally, catalyzes the formation of acetyl phosphate from acetate and ATP. Can also catalyze the reverse reaction. The polypeptide is Acetate kinase (Streptococcus pyogenes serotype M12 (strain MGAS2096)).